The primary structure comprises 193 residues: nitroreductase FRM2 (193 aa).

The protein belongs to the nitroreductase family. It depends on FMN as a cofactor.

The protein localises to the cytoplasm. The protein resides in the nucleus. The catalysed reaction is 4-(hydroxyamino)quinoline N-oxide + 2 NAD(+) + H2O = 4-nitroquinoline N-oxide + 2 NADH + 2 H(+). In terms of biological role, type II nitroreductase, able to reduce 4-nitroquinoline N-oxide (4-NQO) into 4-aminoquinoline-N-oxide (4-AQO) via 4-hydroxyaminoquinoline (4-HAQO), using NADH as reductant. involved in the oxidative stress response. Plays a possible role in the metal stress response. Involved in negative regulation of fatty acid metabolism. This is nitroreductase FRM2 from Saccharomyces cerevisiae (strain ATCC 204508 / S288c) (Baker's yeast).